The following is a 307-amino-acid chain: UDP-3-O-acyl-N-acetylglucosamine deacetylase (307 aa).

Positions 78, 241, and 245 each coordinate Zn(2+). His268 functions as the Proton donor in the catalytic mechanism.

It belongs to the LpxC family. Zn(2+) is required as a cofactor.

The catalysed reaction is a UDP-3-O-[(3R)-3-hydroxyacyl]-N-acetyl-alpha-D-glucosamine + H2O = a UDP-3-O-[(3R)-3-hydroxyacyl]-alpha-D-glucosamine + acetate. The protein operates within glycolipid biosynthesis; lipid IV(A) biosynthesis; lipid IV(A) from (3R)-3-hydroxytetradecanoyl-[acyl-carrier-protein] and UDP-N-acetyl-alpha-D-glucosamine: step 2/6. Catalyzes the hydrolysis of UDP-3-O-myristoyl-N-acetylglucosamine to form UDP-3-O-myristoylglucosamine and acetate, the committed step in lipid A biosynthesis. In Bordetella avium (strain 197N), this protein is UDP-3-O-acyl-N-acetylglucosamine deacetylase.